The primary structure comprises 305 residues: Transcriptional activator protein PfeR (305 aa).

A Response regulatory domain is found at 79–192; sequence RLLLVEDDPR…ELDARTDALL (114 aa). A 4-aspartylphosphate modification is found at aspartate 128. Residues 200 to 301 constitute a DNA-binding region (ompR/PhoB-type); that stretch reads LPLAQRRDTR…VRGQGYLLVE (102 aa).

Post-translationally, phosphorylated by PfeS.

The protein localises to the cytoplasm. Functionally, member of the two-component regulatory system PfeR/PfeS. Activates expression of the ferric enterobactin receptor. The sequence is that of Transcriptional activator protein PfeR (pfeR) from Pseudomonas aeruginosa (strain ATCC 15692 / DSM 22644 / CIP 104116 / JCM 14847 / LMG 12228 / 1C / PRS 101 / PAO1).